The following is a 206-amino-acid chain: dCTP deaminase, dUMP-forming (206 aa).

DCTP contacts are provided by residues 117–122, Asp-135, 143–145, Gln-163, Tyr-177, Lys-184, and Gln-188; these read RSSFGR and TLE. The Proton donor/acceptor role is filled by Glu-145.

This sequence belongs to the dCTP deaminase family. Homotrimer.

It catalyses the reaction dCTP + 2 H2O = dUMP + NH4(+) + diphosphate. Its pathway is pyrimidine metabolism; dUMP biosynthesis; dUMP from dCTP: step 1/1. Functionally, bifunctional enzyme that catalyzes both the deamination of dCTP to dUTP and the hydrolysis of dUTP to dUMP without releasing the toxic dUTP intermediate. This Methanococcus maripaludis (strain C7 / ATCC BAA-1331) protein is dCTP deaminase, dUMP-forming.